We begin with the raw amino-acid sequence, 371 residues long: Signal peptide peptidase-like 1 (371 aa).

Residues 1–6 are Lumenal-facing; it reads MESLWK. Residues 7 to 27 traverse the membrane as a helical segment; sequence LSYLLEPASLALILTAVSVAY. The Cytoplasmic portion of the chain corresponds to 28-57; sequence ASASRALDHGREMERNLDFSEASITLDRSQ. The helical transmembrane segment at 58-75 threads the bilayer; sequence ALMIPLASSCSLLLMFYL. The Lumenal portion of the chain corresponds to 76–80; that stretch reads FSSVS. The helical transmembrane segment at 81–103 threads the bilayer; that stretch reads HLVTAFTAVASAMALFFCLSPYV. Residues 104-123 are Cytoplasmic-facing; the sequence is NCVRSRLGVGDPFVSRCCSK. The chain crosses the membrane as a helical span at residues 124-146; it reads PFTRLQGLLVAICVGTVVAWLVS. Residues 147–149 lie on the Lumenal side of the membrane; sequence GHW. Residues 150–167 traverse the membrane as a helical segment; sequence LLNNLLGISICIAFVSHV. At 168 to 171 the chain is on the cytoplasmic side; sequence RLPN. A helical transmembrane segment spans residues 172–192; it reads IKICALLLVCLFVYDVFWVFF. Aspartate 186 is an active-site residue. The Lumenal portion of the chain corresponds to 193-258; that stretch reads SERFFGANVM…LAPGSSPGDY (66 aa). The chain crosses the membrane as a helical span at residues 259-279; that stretch reads MMLGLGDMAIPGMLLALVLSF. The active site involves aspartate 265. At 280 to 301 the chain is on the cytoplasmic side; sequence DHRKIKDMSVSQDMPPSKQRKY. A helical transmembrane segment spans residues 302-322; it reads VWYALTGYGVGLVTALAAGIL. Residues 323-326 lie on the Lumenal side of the membrane; sequence SQSP. Residues 327–347 traverse the membrane as a helical segment; it reads QPALLYLVPSTLGPVMYMSWL. Residues 328 to 330 carry the PAL motif; the sequence is PAL. At 348-371 the chain is on the cytoplasmic side; the sequence is RNELWELWEGSRPIINDKAHLLEV.

It belongs to the peptidase A22B family.

Its subcellular location is the endosome membrane. Its function is as follows. Intramembrane-cleaving aspartic protease (I-CLiP) that cleaves type II membrane signal peptides in the hydrophobic plane of the membrane. The polypeptide is Signal peptide peptidase-like 1 (SPPL1) (Oryza sativa subsp. japonica (Rice)).